Reading from the N-terminus, the 323-residue chain is SURF1-like protein (323 aa).

Residues 57–71 are compositionally biased toward basic and acidic residues; the sequence is DAPKSRENREKDGGK. The tract at residues 57 to 76 is disordered; it reads DAPKSRENREKDGGKSKKSK. 2 helical membrane-spanning segments follow: residues 81–101 and 299–319; these read WSTGSVLMLTIPVFAFSLGIW and HLNYLTTWFTLTLVTMLMWIH.

The protein belongs to the SURF1 family.

It localises to the mitochondrion inner membrane. Probably involved in the biogenesis of the COX complex. In Caenorhabditis elegans, this protein is SURF1-like protein (sft-1).